The chain runs to 329 residues: Ubiquitin carboxyl-terminal hydrolase isozyme L5 (329 aa).

Positions 7 to 225 constitute a UCH catalytic domain; that stretch reads EWCLMESDPG…IRFNLMAIVS (219 aa). An N6-succinyllysine modification is found at Lys-47. The active-site Nucleophile is Cys-88. Lys-158 is modified (N6-acetyllysine). His-164 functions as the Proton donor in the catalytic mechanism. At Lys-289 the chain carries N6-succinyllysine. The ULD domain occupies 291–319; the sequence is NYLPFIMELLKTLAEHQQLIPLVEKAKEK. The interval 313–329 is interaction with ADRM1; sequence VEKAKEKQNAKKAQETK.

Belongs to the peptidase C12 family. As to quaternary structure, component of the 19S (PA700) regulatory complex of the 26S proteasome. Interacts with ADRM1 and NFRKB. Component of the INO80 complex; specifically part of a complex module associated with N-terminus of INO80.

It localises to the cytoplasm. It is found in the nucleus. It carries out the reaction Thiol-dependent hydrolysis of ester, thioester, amide, peptide and isopeptide bonds formed by the C-terminal Gly of ubiquitin (a 76-residue protein attached to proteins as an intracellular targeting signal).. Its activity is regulated as follows. Activated by ADRM1. Inhibited by interaction with NFRKB. In terms of biological role, protease that specifically cleaves 'Lys-48'-linked polyubiquitin chains. Deubiquitinating enzyme associated with the 19S regulatory subunit of the 26S proteasome. Putative regulatory component of the INO80 complex; however is inactive in the INO80 complex and is activated by a transient interaction of the INO80 complex with the proteasome via ADRM1. In Sus scrofa (Pig), this protein is Ubiquitin carboxyl-terminal hydrolase isozyme L5 (UCHL5).